The sequence spans 487 residues: Aspartyl/glutamyl-tRNA(Asn/Gln) amidotransferase subunit B (487 aa).

It belongs to the GatB/GatE family. GatB subfamily. As to quaternary structure, heterotrimer of A, B and C subunits.

The enzyme catalyses L-glutamyl-tRNA(Gln) + L-glutamine + ATP + H2O = L-glutaminyl-tRNA(Gln) + L-glutamate + ADP + phosphate + H(+). The catalysed reaction is L-aspartyl-tRNA(Asn) + L-glutamine + ATP + H2O = L-asparaginyl-tRNA(Asn) + L-glutamate + ADP + phosphate + 2 H(+). Functionally, allows the formation of correctly charged Asn-tRNA(Asn) or Gln-tRNA(Gln) through the transamidation of misacylated Asp-tRNA(Asn) or Glu-tRNA(Gln) in organisms which lack either or both of asparaginyl-tRNA or glutaminyl-tRNA synthetases. The reaction takes place in the presence of glutamine and ATP through an activated phospho-Asp-tRNA(Asn) or phospho-Glu-tRNA(Gln). This Chlamydia abortus (strain DSM 27085 / S26/3) (Chlamydophila abortus) protein is Aspartyl/glutamyl-tRNA(Asn/Gln) amidotransferase subunit B.